A 557-amino-acid polypeptide reads, in one-letter code: MRSDMIKKGFDKAPHRSLLKATGLKDEDFDKPFIAICNSFIEIIPGHKHLNEFGKLVKEAVRAAGMVPFEFNTIGVDDGIAMGHIGMRYSLPSREIIADSVETVVNAHWFDGMICIPNCDKITPGMMMAALRINIPTVFVSGGPMAAGKTSKGDVVDLSSVFEGVGAYQSGKISEEELKDIEDHGCPSCGSCSGMFTANSMNCLCEVLGLALPGNGSILAIDPRREELIKQAAEKLKILIERDIKPRDIVTEEAIDDAFALDMAMGGSTNTVLHTLALAQEAGLDYDMNRIDAVSRRVPHLCKVSPASNWHMEDIDRAGGISAILKEMSRKEGVLHLDRITATGQTLRENIAHAEIKDKEVIHSLENPHSEEGGLRILKGNLAKDGAVIKSGATEVIRFEGPCVIFNSQDEALAGIMLGKVKKGDVVIIRYEGPRGGPGMPEMLAPTSAIAGMGLGADVALLTDGRFSGASRGISVGHISPEAAAGGTIALLEQGDIVCIDVEERLLEVRVSDEELDKRKKEWKRPEPKVKTGWLGRYAQMVTSANTGAVLKIPNFD.

Asp78 serves as a coordination point for Mg(2+). Position 119 (Cys119) interacts with [2Fe-2S] cluster. Mg(2+) contacts are provided by Asp120 and Lys121. Lys121 bears the N6-carboxylysine mark. [2Fe-2S] cluster is bound at residue Cys192. Glu442 is a Mg(2+) binding site. Ser468 functions as the Proton acceptor in the catalytic mechanism.

This sequence belongs to the IlvD/Edd family. Homodimer. The cofactor is [2Fe-2S] cluster. It depends on Mg(2+) as a cofactor.

The enzyme catalyses (2R)-2,3-dihydroxy-3-methylbutanoate = 3-methyl-2-oxobutanoate + H2O. The catalysed reaction is (2R,3R)-2,3-dihydroxy-3-methylpentanoate = (S)-3-methyl-2-oxopentanoate + H2O. It participates in amino-acid biosynthesis; L-isoleucine biosynthesis; L-isoleucine from 2-oxobutanoate: step 3/4. Its pathway is amino-acid biosynthesis; L-valine biosynthesis; L-valine from pyruvate: step 3/4. Its function is as follows. Functions in the biosynthesis of branched-chain amino acids. Catalyzes the dehydration of (2R,3R)-2,3-dihydroxy-3-methylpentanoate (2,3-dihydroxy-3-methylvalerate) into 2-oxo-3-methylpentanoate (2-oxo-3-methylvalerate) and of (2R)-2,3-dihydroxy-3-methylbutanoate (2,3-dihydroxyisovalerate) into 2-oxo-3-methylbutanoate (2-oxoisovalerate), the penultimate precursor to L-isoleucine and L-valine, respectively. This chain is Dihydroxy-acid dehydratase, found in Bacillus cereus (strain AH820).